Consider the following 226-residue polypeptide: Probable chemoreceptor glutamine deamidase CheD (226 aa).

It belongs to the CheD family.

It carries out the reaction L-glutaminyl-[protein] + H2O = L-glutamyl-[protein] + NH4(+). Its function is as follows. Probably deamidates glutamine residues to glutamate on methyl-accepting chemotaxis receptors (MCPs), playing an important role in chemotaxis. The polypeptide is Probable chemoreceptor glutamine deamidase CheD (Bordetella avium (strain 197N)).